A 328-amino-acid chain; its full sequence is Delta(3,5)-Delta(2,4)-dienoyl-CoA isomerase, mitochondrial (328 aa).

The transit peptide at 1-26 directs the protein to the mitochondrion; the sequence is MAAGIVASRRLRDLLTRRLTASNYPG. Residues 116–120 and Gly174 contribute to the substrate site; that span reads AGVDL. An N6-succinyllysine modification is found at Lys231. Ser268 carries the phosphoserine modification. A Microbody targeting signal motif is present at residues 326–328; that stretch reads SKL. Lys327 carries the post-translational modification N6-acetyllysine.

It belongs to the enoyl-CoA hydratase/isomerase family. As to quaternary structure, homohexamer.

The protein resides in the mitochondrion. It localises to the peroxisome. It carries out the reaction (3E,5Z)-octadienoyl-CoA = (2E,4E)-octadienoyl-CoA. The enzyme catalyses (3E,5Z,8Z,11Z,14Z)-eicosapentaenoyl-CoA = (2E,4E,8Z,11Z,14Z)-eicosapentaenoyl-CoA. The protein operates within lipid metabolism; fatty acid beta-oxidation. Isomerization of 3-trans,5-cis-dienoyl-CoA to 2-trans,4-trans-dienoyl-CoA. In Pongo abelii (Sumatran orangutan), this protein is Delta(3,5)-Delta(2,4)-dienoyl-CoA isomerase, mitochondrial (ECH1).